An 80-amino-acid polypeptide reads, in one-letter code: Protein FAM229B (80 aa).

The disordered stretch occupies residues 1–44 (MPFRFGTQPRRFPVEGGDSSIGLEPGLSSSATCNGKEMSPTRQL).

This sequence belongs to the FAM229 family.

In Bos taurus (Bovine), this protein is Protein FAM229B (FAM229B).